The chain runs to 431 residues: Intraflagellar transport protein 38 (431 aa).

A coiled-coil region spans residues 177 to 218 (SAAVQQRIKNLAAECNTLQEEVTTNKREKAKLEEQITQKKQS). The interval 346-431 (INTNAEIPDD…EELDPDNIEF (86 aa)) is disordered. Residues 352 to 370 (IPDDESYSYSYEEEEEEEQ) are compositionally biased toward acidic residues. The span at 384–405 (PETHSNGEKHRGLDELSHKSNE) shows a compositional bias: basic and acidic residues. Over residues 420 to 431 (GGEELDPDNIEF) the composition is skewed to acidic residues.

The protein belongs to the CLUAP1 family.

Its subcellular location is the cell projection. It localises to the cilium. It is found in the flagellum. The protein localises to the cytoplasm. The protein resides in the cytoskeleton. Its subcellular location is the flagellum axoneme. It localises to the flagellum basal body. Component of the intraflagellar transport complex B (IFT-B) involved in flagellar assembly. This is Intraflagellar transport protein 38 from Giardia intestinalis (strain ATCC 50803 / WB clone C6) (Giardia lamblia).